The sequence spans 334 residues: GTP 3',8-cyclase (334 aa).

The Radical SAM core domain occupies Arg13–Ala239. Arg22 serves as a coordination point for GTP. Residues Cys29 and Cys33 each coordinate [4Fe-4S] cluster. Tyr35 provides a ligand contact to S-adenosyl-L-methionine. Cys36 serves as a coordination point for [4Fe-4S] cluster. Arg73 is a GTP binding site. Gly77 provides a ligand contact to S-adenosyl-L-methionine. Thr104 serves as a coordination point for GTP. Ser128 is a binding site for S-adenosyl-L-methionine. Residue Lys165 participates in GTP binding. Met199 lines the S-adenosyl-L-methionine pocket. [4Fe-4S] cluster contacts are provided by Cys262 and Cys265. Residue Arg267–Arg269 participates in GTP binding. Cys279 lines the [4Fe-4S] cluster pocket.

It belongs to the radical SAM superfamily. MoaA family. As to quaternary structure, monomer and homodimer. [4Fe-4S] cluster is required as a cofactor.

It carries out the reaction GTP + AH2 + S-adenosyl-L-methionine = (8S)-3',8-cyclo-7,8-dihydroguanosine 5'-triphosphate + 5'-deoxyadenosine + L-methionine + A + H(+). It functions in the pathway cofactor biosynthesis; molybdopterin biosynthesis. In terms of biological role, catalyzes the cyclization of GTP to (8S)-3',8-cyclo-7,8-dihydroguanosine 5'-triphosphate. The chain is GTP 3',8-cyclase from Vibrio vulnificus (strain YJ016).